Consider the following 71-residue polypeptide: Small, acid-soluble spore protein 2 (71 aa).

Belongs to the alpha/beta-type SASP family.

Its function is as follows. SASP are bound to spore DNA. They are double-stranded DNA-binding proteins that cause DNA to change to an a-like conformation. They protect the DNA backbone from chemical and enzymatic cleavage and are thus involved in dormant spore's high resistance to UV light. This is Small, acid-soluble spore protein 2 from Bacillus subtilis.